Reading from the N-terminus, the 420-residue chain is Histidine--tRNA ligase (420 aa).

The protein belongs to the class-II aminoacyl-tRNA synthetase family. In terms of assembly, homodimer.

It localises to the cytoplasm. It catalyses the reaction tRNA(His) + L-histidine + ATP = L-histidyl-tRNA(His) + AMP + diphosphate + H(+). The polypeptide is Histidine--tRNA ligase (Staphylococcus saprophyticus subsp. saprophyticus (strain ATCC 15305 / DSM 20229 / NCIMB 8711 / NCTC 7292 / S-41)).